Reading from the N-terminus, the 369-residue chain is tRNA/tmRNA (uracil-C(5))-methyltransferase (369 aa).

S-adenosyl-L-methionine is bound by residues Gln-190, Tyr-218, Asn-223, Glu-239, and Asp-301. Cys-326 (nucleophile) is an active-site residue. Catalysis depends on Glu-360, which acts as the Proton acceptor.

It belongs to the class I-like SAM-binding methyltransferase superfamily. RNA M5U methyltransferase family. TrmA subfamily.

It catalyses the reaction uridine(54) in tRNA + S-adenosyl-L-methionine = 5-methyluridine(54) in tRNA + S-adenosyl-L-homocysteine + H(+). It carries out the reaction uridine(341) in tmRNA + S-adenosyl-L-methionine = 5-methyluridine(341) in tmRNA + S-adenosyl-L-homocysteine + H(+). Functionally, dual-specificity methyltransferase that catalyzes the formation of 5-methyluridine at position 54 (m5U54) in all tRNAs, and that of position 341 (m5U341) in tmRNA (transfer-mRNA). This chain is tRNA/tmRNA (uracil-C(5))-methyltransferase, found in Vibrio atlanticus (strain LGP32) (Vibrio splendidus (strain Mel32)).